Reading from the N-terminus, the 91-residue chain is Cell division topological specificity factor (91 aa).

The protein belongs to the MinE family.

In terms of biological role, prevents the cell division inhibition by proteins MinC and MinD at internal division sites while permitting inhibition at polar sites. This ensures cell division at the proper site by restricting the formation of a division septum at the midpoint of the long axis of the cell. In Bradyrhizobium diazoefficiens (strain JCM 10833 / BCRC 13528 / IAM 13628 / NBRC 14792 / USDA 110), this protein is Cell division topological specificity factor.